Here is a 272-residue protein sequence, read N- to C-terminus: Homeobox protein SIX3 (272 aa).

A DNA-binding region (homeobox) is located at residues 169-228 (GEQKTHCFKERTRGLLREWYLQDPYPNPGKKRELAHATGLTPTQVGNWFKNRRQRDRAAA). The disordered stretch occupies residues 244-272 (CTLSGGDSSERADGDTFLSVTDSDSDLDV).

The protein belongs to the SIX/Sine oculis homeobox family. As to quaternary structure, interacts with GMNN.

Its subcellular location is the nucleus. Transcriptional regulator which can act as both a transcriptional repressor and activator by binding a ATTA homeodomain core recognition sequence on these target genes. During forebrain development represses WNT1 expression allowing zona limitans intrathalamica formation and thereby ensuring proper anterio-posterior patterning of the diencephalon and formation of the rostral diencephalon. Acts as a direct upstream activator of SHH expression in the rostral diencephalon ventral midline and that in turn SHH maintains its expression. In addition, Six3 activity is required for the formation of the telencephalon. During postnatal stages of brain development is necessary for ependymal cell maturation by promoting the maturation of radial glia into ependymal cells through regulation of neuroblast proliferation and migration. Acts on the proliferation and differentiation of neural progenitor cells through activating transcription of CCND1 and CCND2. During early lens formation plays a role in lens induction and specification by activating directly PAX6 in the presumptive lens ectoderm. In turn PAX6 activates SIX3 resulting in activation of PDGFRA and CCND1 promoting cell proliferation. Also is required for the neuroretina development by directly suppressing WNT8B expression in the anterior neural plate territory. Its action during retina development and lens morphogenesis is AES and TLE4-dependent manner. Furthermore, during eye development regulates several genes expression. Before and during early lens development represses the CRYGF promoter by binding a SIX repressor element. Directly activates RHO transcription, or cooperates with CRX or NRL. Six3 also functions in the formation of the proximodistal axis of the optic cup, and promotes the formation of optic vesicles-like structures. During pituitary development, acts in parallel or alternatively with HESX1 to control cell proliferation through Wnt/beta-catenin pathway. Plays a role in eye development by suppressing WNT1 expression and in dorsal-ventral patterning by repressing BMP signaling pathway. This chain is Homeobox protein SIX3 (six3), found in Oryzias latipes (Japanese rice fish).